Reading from the N-terminus, the 70-residue chain is MSILISNKQFNHGLKDEFATKKDLELLEERILRYVDNKFNQLDKKIDRTFYLLVFFIILWVSREAFFYLI.

The helical transmembrane segment at 50-70 (FYLLVFFIILWVSREAFFYLI) threads the bilayer.

It belongs to the M.jannaschii MJ0023/MJ0349/MJ1072/MJ1074/MJ1107/MJECL16 family.

The protein localises to the membrane. This is an uncharacterized protein from Methanocaldococcus jannaschii (strain ATCC 43067 / DSM 2661 / JAL-1 / JCM 10045 / NBRC 100440) (Methanococcus jannaschii).